The following is a 58-amino-acid chain: uncharacterized protein (58 aa).

2 4Fe-4S ferredoxin-type domains span residues 2–27 (GIKI…IKTY) and 28–57 (GVAI…VDTS). 8 residues coordinate [4Fe-4S] cluster: C9, C12, C15, C19, C37, C40, C43, and C47.

[4Fe-4S] cluster is required as a cofactor.

In terms of biological role, ferredoxins are iron-sulfur proteins that transfer electrons probably in the CO-dehydrogenase complex. This is an uncharacterized protein from Methanocaldococcus jannaschii (strain ATCC 43067 / DSM 2661 / JAL-1 / JCM 10045 / NBRC 100440) (Methanococcus jannaschii).